We begin with the raw amino-acid sequence, 378 residues long: Probable tRNA sulfurtransferase (378 aa).

A THUMP domain is found at 51 to 153 (DANLEKLQYV…SDKTYLFSKT (103 aa)). Residues 171 to 172 (LM), 196 to 197 (SF), arginine 253, glycine 275, and glutamine 284 contribute to the ATP site.

It belongs to the ThiI family.

It is found in the cytoplasm. The catalysed reaction is [ThiI sulfur-carrier protein]-S-sulfanyl-L-cysteine + a uridine in tRNA + 2 reduced [2Fe-2S]-[ferredoxin] + ATP + H(+) = [ThiI sulfur-carrier protein]-L-cysteine + a 4-thiouridine in tRNA + 2 oxidized [2Fe-2S]-[ferredoxin] + AMP + diphosphate. It carries out the reaction [ThiS sulfur-carrier protein]-C-terminal Gly-Gly-AMP + S-sulfanyl-L-cysteinyl-[cysteine desulfurase] + AH2 = [ThiS sulfur-carrier protein]-C-terminal-Gly-aminoethanethioate + L-cysteinyl-[cysteine desulfurase] + A + AMP + 2 H(+). The protein operates within cofactor biosynthesis; thiamine diphosphate biosynthesis. Its function is as follows. Catalyzes the ATP-dependent transfer of a sulfur to tRNA to produce 4-thiouridine in position 8 of tRNAs, which functions as a near-UV photosensor. Also catalyzes the transfer of sulfur to the sulfur carrier protein ThiS, forming ThiS-thiocarboxylate. This is a step in the synthesis of thiazole, in the thiamine biosynthesis pathway. The sulfur is donated as persulfide by IscS. This is Probable tRNA sulfurtransferase from Mycoplasmopsis agalactiae (strain NCTC 10123 / CIP 59.7 / PG2) (Mycoplasma agalactiae).